Consider the following 343-residue polypeptide: Phosphoribosylformylglycinamidine cyclo-ligase (343 aa).

Belongs to the AIR synthase family.

Its subcellular location is the cytoplasm. It carries out the reaction 2-formamido-N(1)-(5-O-phospho-beta-D-ribosyl)acetamidine + ATP = 5-amino-1-(5-phospho-beta-D-ribosyl)imidazole + ADP + phosphate + H(+). Its pathway is purine metabolism; IMP biosynthesis via de novo pathway; 5-amino-1-(5-phospho-D-ribosyl)imidazole from N(2)-formyl-N(1)-(5-phospho-D-ribosyl)glycinamide: step 2/2. This Rippkaea orientalis (strain PCC 8801 / RF-1) (Cyanothece sp. (strain PCC 8801)) protein is Phosphoribosylformylglycinamidine cyclo-ligase.